A 145-amino-acid polypeptide reads, in one-letter code: INGDAKGTVFFEQESEKCPVKVTGEVTGLAKGLHGFHVHEFGDNTNGCMSSGPHFNPQGKEHGAPTDENRHLGDLGNITATGDGPTAVDICDCKITLFGANSIIGRTVVVHADPDDLGKGGHELSKTTGNAGARIGCGVIGIAKI.

Cu cation is bound by residues H37, H39, and H54. C48 and C137 are disulfide-bonded. Residues H54, H62, H71, and D74 each contribute to the Zn(2+) site. H111 contacts Cu cation.

This sequence belongs to the Cu-Zn superoxide dismutase family. As to quaternary structure, homodimer. The cofactor is Cu cation. Zn(2+) is required as a cofactor.

The protein localises to the cytoplasm. It carries out the reaction 2 superoxide + 2 H(+) = H2O2 + O2. In terms of biological role, destroys radicals which are normally produced within the cells and which are toxic to biological systems. This chain is Superoxide dismutase [Cu-Zn], found in Drosophila busckii (Fruit fly).